Here is a 313-residue protein sequence, read N- to C-terminus: tRNA dimethylallyltransferase (313 aa).

ATP is bound at residue 17–24 (GPTASGKT). Residue 19–24 (TASGKT) coordinates substrate. 3 interaction with substrate tRNA regions span residues 42 to 45 (DSAL), 166 to 170 (QRLSR), and 247 to 252 (RCVGYR).

The protein belongs to the IPP transferase family. In terms of assembly, monomer. It depends on Mg(2+) as a cofactor.

The catalysed reaction is adenosine(37) in tRNA + dimethylallyl diphosphate = N(6)-dimethylallyladenosine(37) in tRNA + diphosphate. In terms of biological role, catalyzes the transfer of a dimethylallyl group onto the adenine at position 37 in tRNAs that read codons beginning with uridine, leading to the formation of N6-(dimethylallyl)adenosine (i(6)A). The polypeptide is tRNA dimethylallyltransferase (Yersinia pseudotuberculosis serotype O:1b (strain IP 31758)).